An 89-amino-acid chain; its full sequence is Small ribosomal subunit protein uS19 (89 aa).

Belongs to the universal ribosomal protein uS19 family.

Protein S19 forms a complex with S13 that binds strongly to the 16S ribosomal RNA. The sequence is that of Small ribosomal subunit protein uS19 from Stenotrophomonas maltophilia (strain R551-3).